A 75-amino-acid chain; its full sequence is Large ribosomal subunit protein bL31c (75 aa).

Belongs to the bacterial ribosomal protein bL31 family. Type A subfamily. As to quaternary structure, part of the 50S ribosomal subunit.

The protein localises to the plastid. The protein resides in the chloroplast. Its function is as follows. Binds the 23S rRNA. This is Large ribosomal subunit protein bL31c from Cyanidium caldarium (Red alga).